The following is a 208-amino-acid chain: Guanylate kinase (208 aa).

In terms of domain architecture, Guanylate kinase-like spans 4 to 185 (GNLYIISAPS…ALVDLEHILR (182 aa)). 11 to 18 (APSGAGKS) is an ATP binding site.

This sequence belongs to the guanylate kinase family.

The protein resides in the cytoplasm. It carries out the reaction GMP + ATP = GDP + ADP. Functionally, essential for recycling GMP and indirectly, cGMP. The polypeptide is Guanylate kinase (Histophilus somni (strain 129Pt) (Haemophilus somnus)).